The chain runs to 605 residues: Elongation factor 4 (605 aa).

In terms of domain architecture, tr-type G spans 11–193; it reads KRIRNFSIIA…KVVSNIPSPR (183 aa). GTP contacts are provided by residues 23–28 and 140–143; these read DHGKST and NKID.

It belongs to the TRAFAC class translation factor GTPase superfamily. Classic translation factor GTPase family. LepA subfamily.

It localises to the cell membrane. It carries out the reaction GTP + H2O = GDP + phosphate + H(+). Functionally, required for accurate and efficient protein synthesis under certain stress conditions. May act as a fidelity factor of the translation reaction, by catalyzing a one-codon backward translocation of tRNAs on improperly translocated ribosomes. Back-translocation proceeds from a post-translocation (POST) complex to a pre-translocation (PRE) complex, thus giving elongation factor G a second chance to translocate the tRNAs correctly. Binds to ribosomes in a GTP-dependent manner. This Phytoplasma mali (strain AT) protein is Elongation factor 4.